Consider the following 175-residue polypeptide: 6,7-dimethyl-8-ribityllumazine synthase (175 aa).

Residues phenylalanine 24, 58-60, and 82-84 each bind 5-amino-6-(D-ribitylamino)uracil; these read ALE and AVI. (2S)-2-hydroxy-3-oxobutyl phosphate is bound at residue 87 to 88; it reads ET. Histidine 90 acts as the Proton donor in catalysis. Asparagine 115 is a binding site for 5-amino-6-(D-ribitylamino)uracil. Arginine 129 contributes to the (2S)-2-hydroxy-3-oxobutyl phosphate binding site. Residues 151-175 are disordered; the sequence is LEPEEDDEDEDEEDEDFDDEETDRR. Residues 152 to 175 show a composition bias toward acidic residues; sequence EPEEDDEDEDEEDEDFDDEETDRR.

This sequence belongs to the DMRL synthase family.

It carries out the reaction (2S)-2-hydroxy-3-oxobutyl phosphate + 5-amino-6-(D-ribitylamino)uracil = 6,7-dimethyl-8-(1-D-ribityl)lumazine + phosphate + 2 H2O + H(+). It functions in the pathway cofactor biosynthesis; riboflavin biosynthesis; riboflavin from 2-hydroxy-3-oxobutyl phosphate and 5-amino-6-(D-ribitylamino)uracil: step 1/2. Catalyzes the formation of 6,7-dimethyl-8-ribityllumazine by condensation of 5-amino-6-(D-ribitylamino)uracil with 3,4-dihydroxy-2-butanone 4-phosphate. This is the penultimate step in the biosynthesis of riboflavin. The protein is 6,7-dimethyl-8-ribityllumazine synthase of Bordetella petrii (strain ATCC BAA-461 / DSM 12804 / CCUG 43448).